The primary structure comprises 413 residues: Lipoyl synthase, mitochondrial (413 aa).

Residues 1-33 constitute a mitochondrion transit peptide; sequence MAAATNRFRALYSSSRVATPQAGSASYLSYRGY. Residues C133, C138, C144, C164, C168, C171, and S379 each coordinate [4Fe-4S] cluster. The Radical SAM core domain maps to 147–368; sequence GGDKAAATAT…RQRALDMGFL (222 aa).

Belongs to the radical SAM superfamily. Lipoyl synthase family. The cofactor is [4Fe-4S] cluster.

Its subcellular location is the mitochondrion. It catalyses the reaction [[Fe-S] cluster scaffold protein carrying a second [4Fe-4S](2+) cluster] + N(6)-octanoyl-L-lysyl-[protein] + 2 oxidized [2Fe-2S]-[ferredoxin] + 2 S-adenosyl-L-methionine + 4 H(+) = [[Fe-S] cluster scaffold protein] + N(6)-[(R)-dihydrolipoyl]-L-lysyl-[protein] + 4 Fe(3+) + 2 hydrogen sulfide + 2 5'-deoxyadenosine + 2 L-methionine + 2 reduced [2Fe-2S]-[ferredoxin]. Its pathway is protein modification; protein lipoylation via endogenous pathway; protein N(6)-(lipoyl)lysine from octanoyl-[acyl-carrier-protein]: step 2/2. Catalyzes the radical-mediated insertion of two sulfur atoms into the C-6 and C-8 positions of the octanoyl moiety bound to the lipoyl domains of lipoate-dependent enzymes, thereby converting the octanoylated domains into lipoylated derivatives. In Emericella nidulans (strain FGSC A4 / ATCC 38163 / CBS 112.46 / NRRL 194 / M139) (Aspergillus nidulans), this protein is Lipoyl synthase, mitochondrial.